A 316-amino-acid polypeptide reads, in one-letter code: Protein lifeguard 2 (316 aa).

The tract at residues 1 to 53 (MTQGKLSVANKAPGTEGQQQVHGEKKEAPAVPSAPPSYEEATSGEGMKAGAFP) is disordered. The next 3 helical transmembrane spans lie at 106–126 (VYTI…LFTF), 138–158 (PGWY…LACC), and 165–185 (FPWN…LTGM). N-linked (GlcNAc...) asparagine glycosylation occurs at asparagine 191. 4 helical membrane-spanning segments follow: residues 194-214 (SVLL…VFSF), 225-245 (GVLF…AILL), 250-270 (VPWL…LFLA), and 290-310 (IFGA…FLQL).

The protein belongs to the BI1 family. LFG subfamily. As to quaternary structure, interacts with FAS/TNFRSF6 and BAX.

Its subcellular location is the cell membrane. The protein localises to the membrane raft. The protein resides in the postsynaptic cell membrane. Functionally, antiapoptotic protein which protects cells uniquely from Fas-induced apoptosis. Regulates Fas-mediated apoptosis in neurons by interfering with caspase-8 activation. Plays a role in cerebellar development by affecting cerebellar size, internal granular layer (IGL) thickness, and Purkinje cell (PC) development. The sequence is that of Protein lifeguard 2 (FAIM2) from Pongo abelii (Sumatran orangutan).